Here is a 334-residue protein sequence, read N- to C-terminus: Nucleoid-associated protein Pfl01_0983 (334 aa).

It belongs to the YejK family.

The protein localises to the cytoplasm. It localises to the nucleoid. The chain is Nucleoid-associated protein Pfl01_0983 from Pseudomonas fluorescens (strain Pf0-1).